A 386-amino-acid polypeptide reads, in one-letter code: TGF-beta-activated kinase 1 and MAP3K7-binding protein 1 (386 aa).

A PPM-type phosphatase domain is found at 22–327 (HSCRYSKQKN…EEMTVIYVKL (306 aa)).

As to quaternary structure, interacts with mom-4; the interaction enhances mom-4 kinase activity.

Involved in the Wnt signaling pathway by regulating mom-4 kinase activity. This chain is TGF-beta-activated kinase 1 and MAP3K7-binding protein 1, found in Caenorhabditis elegans.